A 330-amino-acid chain; its full sequence is Holliday junction branch migration complex subunit RuvB (330 aa).

The interval 1 to 181 (MEDRLVGCRL…FGVINKLELY (181 aa)) is large ATPase domain (RuvB-L). Residues leucine 20, arginine 21, glycine 62, lysine 65, threonine 66, threonine 67, 128–130 (EDY), arginine 171, tyrosine 181, and arginine 218 contribute to the ATP site. Threonine 66 provides a ligand contact to Mg(2+). A small ATPAse domain (RuvB-S) region spans residues 182–252 (SVEELGQIVK…IARTGLEALE (71 aa)). Residues 255–330 (EIGLDAVDRN…AYEHFGLKYE (76 aa)) are head domain (RuvB-H). DNA-binding residues include lysine 310 and arginine 315.

It belongs to the RuvB family. In terms of assembly, homohexamer. Forms an RuvA(8)-RuvB(12)-Holliday junction (HJ) complex. HJ DNA is sandwiched between 2 RuvA tetramers; dsDNA enters through RuvA and exits via RuvB. An RuvB hexamer assembles on each DNA strand where it exits the tetramer. Each RuvB hexamer is contacted by two RuvA subunits (via domain III) on 2 adjacent RuvB subunits; this complex drives branch migration. In the full resolvosome a probable DNA-RuvA(4)-RuvB(12)-RuvC(2) complex forms which resolves the HJ.

The protein resides in the cytoplasm. The enzyme catalyses ATP + H2O = ADP + phosphate + H(+). In terms of biological role, the RuvA-RuvB-RuvC complex processes Holliday junction (HJ) DNA during genetic recombination and DNA repair, while the RuvA-RuvB complex plays an important role in the rescue of blocked DNA replication forks via replication fork reversal (RFR). RuvA specifically binds to HJ cruciform DNA, conferring on it an open structure. The RuvB hexamer acts as an ATP-dependent pump, pulling dsDNA into and through the RuvAB complex. RuvB forms 2 homohexamers on either side of HJ DNA bound by 1 or 2 RuvA tetramers; 4 subunits per hexamer contact DNA at a time. Coordinated motions by a converter formed by DNA-disengaged RuvB subunits stimulates ATP hydrolysis and nucleotide exchange. Immobilization of the converter enables RuvB to convert the ATP-contained energy into a lever motion, pulling 2 nucleotides of DNA out of the RuvA tetramer per ATP hydrolyzed, thus driving DNA branch migration. The RuvB motors rotate together with the DNA substrate, which together with the progressing nucleotide cycle form the mechanistic basis for DNA recombination by continuous HJ branch migration. Branch migration allows RuvC to scan DNA until it finds its consensus sequence, where it cleaves and resolves cruciform DNA. In Acetivibrio thermocellus (strain ATCC 27405 / DSM 1237 / JCM 9322 / NBRC 103400 / NCIMB 10682 / NRRL B-4536 / VPI 7372) (Clostridium thermocellum), this protein is Holliday junction branch migration complex subunit RuvB.